The following is a 97-amino-acid chain: Secreted LysM effector Mg1LysM (97 aa).

The signal sequence occupies residues 1-18 (MQFTALVAALLSVAAVQA). Positions 37–84 (QQYVARSGDTLTKIAQEIYHDVVGVCDIARANNLADPNRIDAGTPYTI) constitute a LysM domain. 4 residues coordinate chitin: Gly44, Thr48, Asn74, and Ile76.

This sequence belongs to the secreted LysM effector family. Forms homodimers in a chitin-independent manner through interactions at the N-termini of Mg1LysM monomers. Homodimers are further polymerized in a chitin-dependent manner.

Its subcellular location is the secreted. The protein resides in the cell wall. Secreted effector that enables the plant pathogenic fungus to manipulate host defenses for successful infection. Binds chitin but not cellulose or xylan. Chitin-induced polymerization of homodimers forms a contiguous Mg1LysM highly oligomeric super-complexe that is anchored to the chitin in the fungal cell wall to prevent hydrolysis by host chitinases. The protein is Secreted LysM effector Mg1LysM of Zymoseptoria tritici (strain ST99CH_3D7).